Here is a 202-residue protein sequence, read N- to C-terminus: Guanylate kinase (202 aa).

The region spanning 3 to 181 (GNLFIITAPS…ALEDLRAIIR (179 aa)) is the Guanylate kinase-like domain. 10–17 (APSGAGKT) serves as a coordination point for ATP.

It belongs to the guanylate kinase family.

It is found in the cytoplasm. The enzyme catalyses GMP + ATP = GDP + ADP. Essential for recycling GMP and indirectly, cGMP. The protein is Guanylate kinase of Methylobacillus flagellatus (strain ATCC 51484 / DSM 6875 / VKM B-1610 / KT).